A 138-amino-acid polypeptide reads, in one-letter code: Homeobox protein HD-11 (138 aa).

The segment at residues 30–89 is a DNA-binding region (homeobox); that stretch reads CTGKQMRKTRLQTCVLNRIFEISRFPSSKTIVDLALLINVHPKSIQKWFQNTRQAIRKKG.

The protein localises to the nucleus. The chain is Homeobox protein HD-11 (HD-11) from Encephalitozoon cuniculi (strain GB-M1) (Microsporidian parasite).